We begin with the raw amino-acid sequence, 548 residues long: Chaperonin GroEL (548 aa).

Residues Thr30–Pro33, Lys51, Asp87–Thr91, Gly415, and Asp495 each bind ATP.

This sequence belongs to the chaperonin (HSP60) family. Forms a cylinder of 14 subunits composed of two heptameric rings stacked back-to-back. Interacts with the co-chaperonin GroES.

The protein resides in the cytoplasm. It carries out the reaction ATP + H2O + a folded polypeptide = ADP + phosphate + an unfolded polypeptide.. Its function is as follows. Together with its co-chaperonin GroES, plays an essential role in assisting protein folding. The GroEL-GroES system forms a nano-cage that allows encapsulation of the non-native substrate proteins and provides a physical environment optimized to promote and accelerate protein folding. The chain is Chaperonin GroEL from Photorhabdus laumondii subsp. laumondii (strain DSM 15139 / CIP 105565 / TT01) (Photorhabdus luminescens subsp. laumondii).